Reading from the N-terminus, the 194-residue chain is CASP-like protein 1B1 (194 aa).

At 1–24 (MASENGDKLELAFSAVPDPKPKKD) the chain is on the cytoplasmic side. Residues 25-45 (WVILSLRVVAFFATASATLVM) form a helical membrane-spanning segment. Topologically, residues 46–77 (AFNKQTKGMVVATIGTNPVTITLTAMFQHTPA) are extracellular. A helical membrane pass occupies residues 78–98 (FIFFVIVNAIASFYNLLVIGV). Over 99-111 (EILGPQYDYKGLR) the chain is Cytoplasmic. A helical membrane pass occupies residues 112–132 (LGLIAILDVMTMALAATGDGA). Residues 133 to 164 (ATFMAELGRNGNSHARWDKICDKFEAYCNRGG) lie on the Extracellular side of the membrane. The helical transmembrane segment at 165-185 (VALVASFVGLILLLVVTVMSI) threads the bilayer. Residues 186–194 (TKLLKLNRI) lie on the Cytoplasmic side of the membrane.

It belongs to the Casparian strip membrane proteins (CASP) family. As to quaternary structure, homodimer and heterodimers.

Its subcellular location is the cell membrane. This chain is CASP-like protein 1B1, found in Glycine max (Soybean).